The chain runs to 461 residues: Na(+)/H(+) antiporter NhaA (461 aa).

A disordered region spans residues 1-23; it reads MILSTQRLGRFMSPAPTPAPDAK. Helical transmembrane passes span 48 to 68, 89 to 109, 127 to 147, 157 to 177, 186 to 206, 211 to 231, 236 to 256, 257 to 277, 305 to 325, 339 to 359, 374 to 394, and 408 to 428; these read VGGALLVAAAVIALIWANSPV, LSLGAWAADGLLAIFFFLVGL, IVPVAAAAGGVLVPALIYAAV, GWAIPTATDIAFAVAVLAIIG, IFLLTLAVVDDLIAISIIAFF, IQAAPLLLALIPLALYAFLAQ, FFGAHFMAAWAILLPLGIVTW, ALVHASGIHATVAGVLLGFAV, ISAGVAVPIFAFFSAGVAVGG, IGIIMALVLGKPIGIMGTTWI, WIDVFGVSLLAGIGFTVSLLV, and HAKVGILAASLLAAILATVVL.

Belongs to the NhaA Na(+)/H(+) (TC 2.A.33) antiporter family.

It is found in the cell membrane. The enzyme catalyses Na(+)(in) + 2 H(+)(out) = Na(+)(out) + 2 H(+)(in). Na(+)/H(+) antiporter that extrudes sodium in exchange for external protons. The chain is Na(+)/H(+) antiporter NhaA from Arthrobacter sp. (strain FB24).